A 261-amino-acid chain; its full sequence is Ribonuclease HII (261 aa).

Basic and acidic residues predominate over residues methionine 1–valine 20. The tract at residues methionine 1–alanine 23 is disordered. The region spanning tryptophan 42 to proline 230 is the RNase H type-2 domain. Aspartate 48, glutamate 49, and aspartate 139 together coordinate a divalent metal cation.

The protein belongs to the RNase HII family. Requires Mn(2+) as cofactor. Mg(2+) is required as a cofactor.

It is found in the cytoplasm. It carries out the reaction Endonucleolytic cleavage to 5'-phosphomonoester.. Endonuclease that specifically degrades the RNA of RNA-DNA hybrids. This is Ribonuclease HII from Bradyrhizobium diazoefficiens (strain JCM 10833 / BCRC 13528 / IAM 13628 / NBRC 14792 / USDA 110).